A 224-amino-acid chain; its full sequence is Golgi to ER traffic protein 1 (224 aa).

At 1 to 33 the chain is on the lumenal side; the sequence is MDEAIIVDAEFVAPVGTTAGEFVPIDRAPAAGL. The chain crosses the membrane as a helical span at residues 34 to 53; the sequence is LLLVAFVVLYAKVISKLGKP. The Cytoplasmic portion of the chain corresponds to 54–137; it reads AIQEFLWEII…RFFTIISSAI (84 aa). A coiled-coil region spans residues 102–124; sequence AKLDREYGKLKVEIEDINNLLTA. Residues 138–158 form a helical membrane-spanning segment; that stretch reads FLSTTGMKMFLRIKHRKAAIF. At 159 to 182 the chain is on the lumenal side; that stretch reads WLPKNAFPYPIEYILSFSSAPLGS. The helical transmembrane segment at 183-199 threads the bilayer; sequence VSVSAWLMICDAAMDLI. Residues 200 to 224 lie on the Cytoplasmic side of the membrane; that stretch reads VTIFVALVVGVIGMLRSNKVKPKTA.

It belongs to the WRB/GET1 family. In terms of assembly, component of the Golgi to ER traffic (GET) complex, which is composed of GET1, GET2 and GET3. Within the complex, GET1 and GET2 form a heterotetramer which is stabilized by phosphatidylinositol binding and which binds to the GET3 homodimer.

It localises to the endoplasmic reticulum membrane. The protein resides in the golgi apparatus membrane. In terms of biological role, required for the post-translational delivery of tail-anchored (TA) proteins to the endoplasmic reticulum. Together with GET2, acts as a membrane receptor for soluble GET3, which recognizes and selectively binds the transmembrane domain of TA proteins in the cytosol. The GET complex cooperates with the HDEL receptor ERD2 to mediate the ATP-dependent retrieval of resident ER proteins that contain a C-terminal H-D-E-L retention signal from the Golgi to the ER. The sequence is that of Golgi to ER traffic protein 1 from Yarrowia lipolytica (strain CLIB 122 / E 150) (Yeast).